A 201-amino-acid polypeptide reads, in one-letter code: Peptidyl-tRNA hydrolase (201 aa).

Residue tyrosine 15 coordinates tRNA. The Proton acceptor role is filled by histidine 20. TRNA is bound by residues tyrosine 66, asparagine 68, and asparagine 114.

It belongs to the PTH family. Monomer.

It is found in the cytoplasm. It catalyses the reaction an N-acyl-L-alpha-aminoacyl-tRNA + H2O = an N-acyl-L-amino acid + a tRNA + H(+). In terms of biological role, hydrolyzes ribosome-free peptidyl-tRNAs (with 1 or more amino acids incorporated), which drop off the ribosome during protein synthesis, or as a result of ribosome stalling. Its function is as follows. Catalyzes the release of premature peptidyl moieties from peptidyl-tRNA molecules trapped in stalled 50S ribosomal subunits, and thus maintains levels of free tRNAs and 50S ribosomes. The chain is Peptidyl-tRNA hydrolase from Burkholderia mallei (strain ATCC 23344).